We begin with the raw amino-acid sequence, 92 residues long: Large ribosomal subunit protein eL43 (92 aa).

The C4-type zinc finger occupies 39 to 60 (CDFCGKYGMKRQAVGIWCCKGC).

The protein belongs to the eukaryotic ribosomal protein eL43 family.

This is Large ribosomal subunit protein eL43 (RPL37a) from Ostreococcus tauri.